Here is a 200-residue protein sequence, read N- to C-terminus: Late embryogenesis abundant protein 19 (200 aa).

2 disordered regions span residues 1-158 (MASH…KSTV) and 172-200 (TEDKAGTDDGANKDTSATAAATETTARDH). 5 stretches are compositionally biased toward basic and acidic residues: residues 13–23 (GETKAHTEEKA), 30–42 (SKDKASEAKDRAS), 53–81 (QDTKEATKEKAQAAKERASETAQAAKDKT), 88–97 (ARDKAAESKD), and 105–114 (EKTEQAKQKA). Positions 52–81 (GQDTKEATKEKAQAAKERASETAQAAKDKT) form a coiled coil. Residues 115 to 130 (AETAGAAKQKTAETAQ) are compositionally biased toward low complexity. The span at 145–156 (SVLQQASEQVKS) shows a compositional bias: polar residues. The span at 172–183 (TEDKAGTDDGAN) shows a compositional bias: basic and acidic residues. Positions 186 to 200 (TSATAAATETTARDH) are enriched in low complexity.

It belongs to the LEA type 4 family. Expressed in the shoot apex and leaves.

In terms of biological role, involved in response to drought stress. The polypeptide is Late embryogenesis abundant protein 19 (Oryza sativa subsp. indica (Rice)).